We begin with the raw amino-acid sequence, 192 residues long: Putative 3-methyladenine DNA glycosylase (192 aa).

Belongs to the DNA glycosylase MPG family.

The polypeptide is Putative 3-methyladenine DNA glycosylase (Methanoculleus marisnigri (strain ATCC 35101 / DSM 1498 / JR1)).